We begin with the raw amino-acid sequence, 622 residues long: Dynein axonemal assembly factor 1 (622 aa).

Residues 1 to 11 (MHPEVSEQQAD) show a composition bias toward polar residues. Residues 1–80 (MHPEVSEQQA…ARNDRDDRGP (80 aa)) form a disordered region. Basic and acidic residues predominate over residues 32-42 (VRKEEINETKE). A compositionally biased stretch (low complexity) spans 48–59 (STTSCQSQKQQS). Basic and acidic residues predominate over residues 62 to 80 (SRLDCRSGYARNDRDDRGP). LRR repeat units follow at residues 101–123 (ALND…EEYT), 124–145 (GLRC…QAQS), 146–167 (ELRC…EPLQ), 168–189 (KLDA…SCLP), 190–211 (VLNT…QHLR), and 215–236 (RLCV…SVLE). Residues 249–288 (NPVTKHIPNYRRTVTVRLKQLTYLDDRPVFPKDRACAEAW) form the LRRCT domain. Over residues 326–336 (EERKKARDKGE) the composition is skewed to basic and acidic residues. Disordered regions lie at residues 326 to 360 (EERK…PLGE) and 399 to 431 (EEPD…TDGT). 2 stretches are compositionally biased toward low complexity: residues 337 to 351 (TPLP…TSPE) and 415 to 428 (VATA…VAAT). A Phosphoserine modification is found at Ser349. Ser464 and Ser487 each carry phosphoserine. 2 disordered regions span residues 480–503 (ISSL…EHTP) and 525–622 (RVPL…FGLD). Positions 539 to 550 (APETQGQVFSTT) are enriched in polar residues.

This sequence belongs to the DNAAF1 family.

It localises to the cell projection. It is found in the cilium. Its function is as follows. Cilium-specific protein required for the stability of the ciliary architecture. Plays a role in cytoplasmic preassembly of dynein arms. Involved in regulation of microtubule-based cilia and actin-based brush border microvilli. The sequence is that of Dynein axonemal assembly factor 1 (Dnaaf1) from Peromyscus polionotus (Oldfield mouse).